The primary structure comprises 157 residues: Crossover junction endodeoxyribonuclease RuvC (157 aa).

Residues Asp7, Glu66, and Asp139 contribute to the active site. Asp7, Glu66, and Asp139 together coordinate Mg(2+).

Belongs to the RuvC family. Homodimer which binds Holliday junction (HJ) DNA. The HJ becomes 2-fold symmetrical on binding to RuvC with unstacked arms; it has a different conformation from HJ DNA in complex with RuvA. In the full resolvosome a probable DNA-RuvA(4)-RuvB(12)-RuvC(2) complex forms which resolves the HJ. Requires Mg(2+) as cofactor.

The protein resides in the cytoplasm. The catalysed reaction is Endonucleolytic cleavage at a junction such as a reciprocal single-stranded crossover between two homologous DNA duplexes (Holliday junction).. Functionally, the RuvA-RuvB-RuvC complex processes Holliday junction (HJ) DNA during genetic recombination and DNA repair. Endonuclease that resolves HJ intermediates. Cleaves cruciform DNA by making single-stranded nicks across the HJ at symmetrical positions within the homologous arms, yielding a 5'-phosphate and a 3'-hydroxyl group; requires a central core of homology in the junction. The consensus cleavage sequence is 5'-(A/T)TT(C/G)-3'. Cleavage occurs on the 3'-side of the TT dinucleotide at the point of strand exchange. HJ branch migration catalyzed by RuvA-RuvB allows RuvC to scan DNA until it finds its consensus sequence, where it cleaves and resolves the cruciform DNA. The polypeptide is Crossover junction endodeoxyribonuclease RuvC (Helicobacter pylori (strain ATCC 700392 / 26695) (Campylobacter pylori)).